Here is a 764-residue protein sequence, read N- to C-terminus: 5-methyltetrahydropteroyltriglutamate--homocysteine methyltransferase (764 aa).

5-methyltetrahydropteroyltri-L-glutamate contacts are provided by residues 16–19 (RELK) and K121. L-homocysteine is bound by residues 440 to 442 (IGS) and E493. L-methionine is bound by residues 440–442 (IGS) and E493. Residues 524 to 525 (RC) and W570 contribute to the 5-methyltetrahydropteroyltri-L-glutamate site. Position 608 (D608) interacts with L-homocysteine. L-methionine is bound at residue D608. E614 contributes to the 5-methyltetrahydropteroyltri-L-glutamate binding site. Zn(2+)-binding residues include H650, C652, and E674. The Proton donor role is filled by H703. Zn(2+) is bound at residue C735.

This sequence belongs to the vitamin-B12 independent methionine synthase family. It depends on Zn(2+) as a cofactor.

It catalyses the reaction 5-methyltetrahydropteroyltri-L-glutamate + L-homocysteine = tetrahydropteroyltri-L-glutamate + L-methionine. The protein operates within amino-acid biosynthesis; L-methionine biosynthesis via de novo pathway; L-methionine from L-homocysteine (MetE route): step 1/1. Catalyzes the transfer of a methyl group from 5-methyltetrahydrofolate to homocysteine resulting in methionine formation. The sequence is that of 5-methyltetrahydropteroyltriglutamate--homocysteine methyltransferase from Burkholderia cenocepacia (strain HI2424).